The chain runs to 380 residues: Queuine tRNA-ribosyltransferase (380 aa).

Asp96 (proton acceptor) is an active-site residue. Substrate is bound by residues 96–100, Asp150, Gln193, and Gly220; that span reads DSGGF. The tract at residues 251-257 is RNA binding; it reads GVGAPDS. Asp270 acts as the Nucleophile in catalysis. The RNA binding; important for wobble base 34 recognition stretch occupies residues 275-279; that stretch reads TRIAR. Cys308, Cys310, Cys313, and His339 together coordinate Zn(2+).

It belongs to the queuine tRNA-ribosyltransferase family. In terms of assembly, homodimer. Within each dimer, one monomer is responsible for RNA recognition and catalysis, while the other monomer binds to the replacement base PreQ1. It depends on Zn(2+) as a cofactor.

It carries out the reaction 7-aminomethyl-7-carbaguanine + guanosine(34) in tRNA = 7-aminomethyl-7-carbaguanosine(34) in tRNA + guanine. The protein operates within tRNA modification; tRNA-queuosine biosynthesis. In terms of biological role, catalyzes the base-exchange of a guanine (G) residue with the queuine precursor 7-aminomethyl-7-deazaguanine (PreQ1) at position 34 (anticodon wobble position) in tRNAs with GU(N) anticodons (tRNA-Asp, -Asn, -His and -Tyr). Catalysis occurs through a double-displacement mechanism. The nucleophile active site attacks the C1' of nucleotide 34 to detach the guanine base from the RNA, forming a covalent enzyme-RNA intermediate. The proton acceptor active site deprotonates the incoming PreQ1, allowing a nucleophilic attack on the C1' of the ribose to form the product. After dissociation, two additional enzymatic reactions on the tRNA convert PreQ1 to queuine (Q), resulting in the hypermodified nucleoside queuosine (7-(((4,5-cis-dihydroxy-2-cyclopenten-1-yl)amino)methyl)-7-deazaguanosine). The sequence is that of Queuine tRNA-ribosyltransferase from Streptococcus thermophilus (strain ATCC BAA-491 / LMD-9).